We begin with the raw amino-acid sequence, 336 residues long: MSAPGGGRSGPAEWGGFEDNMQGGGSAVIDMENMDDTSGSSFEDMGEMHQRMKEEEEEEAEGEAGAGGEEDGEFLGMKGLQGQLGRQVADQMWQVGKRQASKAFSLYANIDILRPYFDVEPVQVRTRLLESMVPVKMINFPQKIAGELYGPLMLVFTLVAILLHGMKTSDTIIREGTLMGTAIGTCFGYWLGVSSFIYFLAYLCNAQITMVQMLSLLGYGLFGHCITLLVTYNIHFHSLFYIFWLVVGGLSTLRMVAVLVSRTVGHTQRLILCGTLAALHMLFLLYLHFAYHKVVEGILDTLEGPNMPPFQRVARDIPVVSNAVLNTTAKANAMTL.

Residues 1–73 (MSAPGGGRSG…AGAGGEEDGE (73 aa)) are disordered. Residues 1 to 143 (MSAPGGGRSG…PVKMINFPQK (143 aa)) lie on the Cytoplasmic side of the membrane. Over residues 55–73 (EEEEEAEGEAGAGGEEDGE) the composition is skewed to acidic residues. A helical membrane pass occupies residues 144–164 (IAGELYGPLMLVFTLVAILLH). The Lumenal portion of the chain corresponds to 165-182 (GMKTSDTIIREGTLMGTA). Residues 183-203 (IGTCFGYWLGVSSFIYFLAYL) form a helical membrane-spanning segment. Over 204 to 209 (CNAQIT) the chain is Cytoplasmic. Residues 210 to 230 (MVQMLSLLGYGLFGHCITLLV) traverse the membrane as a helical segment. Residues 231–239 (TYNIHFHSL) are Lumenal-facing. The helical transmembrane segment at 240 to 260 (FYIFWLVVGGLSTLRMVAVLV) threads the bilayer. The Cytoplasmic segment spans residues 261-269 (SRTVGHTQR). Residues 270–290 (LILCGTLAALHMLFLLYLHFA) form a helical membrane-spanning segment. The Lumenal portion of the chain corresponds to 291–336 (YHKVVEGILDTLEGPNMPPFQRVARDIPVVSNAVLNTTAKANAMTL). Residue N326 is glycosylated (N-linked (GlcNAc...) asparagine).

This sequence belongs to the YIP1 family.

The protein localises to the cell membrane. It is found in the golgi apparatus. It localises to the cis-Golgi network membrane. Its subcellular location is the cytoplasm. Its function is as follows. Involved in the maintenance of the Golgi structure. May play a role in hematopoiesis. The polypeptide is Protein YIPF3 (YIPF3) (Gallus gallus (Chicken)).